We begin with the raw amino-acid sequence, 89 residues long: Small ribosomal subunit protein uS15 (89 aa).

It belongs to the universal ribosomal protein uS15 family. As to quaternary structure, part of the 30S ribosomal subunit. Forms a bridge to the 50S subunit in the 70S ribosome, contacting the 23S rRNA.

One of the primary rRNA binding proteins, it binds directly to 16S rRNA where it helps nucleate assembly of the platform of the 30S subunit by binding and bridging several RNA helices of the 16S rRNA. Functionally, forms an intersubunit bridge (bridge B4) with the 23S rRNA of the 50S subunit in the ribosome. In Bordetella avium (strain 197N), this protein is Small ribosomal subunit protein uS15.